Reading from the N-terminus, the 677-residue chain is Secretogranin-1 (677 aa).

An N-terminal signal peptide occupies residues 1-20; it reads MQPTLLLSLLGAVGLAAVNS. Cysteines 36 and 57 form a disulfide. Basic and acidic residues-rich tracts occupy residues 64-100 and 118-136; these read SRKDVKDKETTENENTKFEVRLLRDPADASEAHESSS and ADTEKWAEGGGHSRERADE. The interval 64–463 is disordered; it reads SRKDVKDKET…DKARRHPQGA (400 aa). At T79 the chain carries Phosphothreonine. S93, S99, and S100 each carry phosphoserine. O-linked (Xyl...) (chondroitin sulfate) serine glycosylation occurs at S93. The O-glycosylated at one site stretch occupies residues 116–120; the sequence is TKADT. S130 is subject to Phosphoserine; by FAM20C. The residue at position 149 (S149) is a Phosphoserine. 3 stretches are compositionally biased toward basic and acidic residues: residues 150 to 162, 172 to 190, and 200 to 236; these read EEVKTRHSEKSQR, NYQKGERGEDSSEEKHLEE, and NERKQASAIKKEELVARSETHAAGHSQEKTHSREKSS. S183 carries the phosphoserine modification. S225 is modified (phosphoserine; by FAM20C). S239 is a glycosylation site (O-linked (Xyl...) (chondroitin sulfate) serine). S259 and S263 each carry phosphoserine. Residues 262 to 272 show a composition bias toward acidic residues; sequence ESEEGEEDATS. Over residues 277–287 the composition is skewed to basic residues; it reads RRTRPRHHHGR. S293, S294, S311, and S335 each carry phosphoserine. Sulfotyrosine is present on Y341. The segment covering 359–372 has biased composition (basic and acidic residues); that stretch reads WERYRGRGSEEYRA. A phosphoserine; by FAM20C mark is found at S367, S377, and S380. 2 stretches are compositionally biased toward basic and acidic residues: residues 384 to 415 and 433 to 455; these read EDKRNYPSLELDKMAHGYGEESEEERGLEPGK and DTREEKRFLGEGHHRVQENQMDK. Y401 carries the phosphotyrosine modification. At S405 the chain carries Phosphoserine. Residue Y474 is modified to Sulfotyrosine. Positions 475-512 are disordered; that stretch reads GEEGAPGKWQQQGDLQDTKENREEARFQDKQYSSHHTA. A compositionally biased stretch (basic and acidic residues) spans 490–503; that stretch reads QDTKENREEARFQD. S533 and S534 each carry phosphoserine. The residue at position 566 (Y566) is a Sulfotyrosine. Residue S617 is modified to Phosphoserine. The segment at 622 to 653 is disordered; it reads DFYDSEEPVSTHQEAENEKDRADQTVLTEDEK. At Y624 the chain carries Sulfotyrosine. Phosphoserine is present on residues S626 and S631. The span at 634-653 shows a compositional bias: basic and acidic residues; sequence QEAENEKDRADQTVLTEDEK.

It belongs to the chromogranin/secretogranin protein family. In terms of assembly, interacts with ITPR1 in the secretory granules. In terms of processing, extensively processed by limited proteolysis at conserved basic residues. Alternative processing are seen in different tissues. O-glycosylated. As to expression, detected in cerebrospinal fluid and urine (at protein level). Expressed in the adrenal medulla, and in pheochromocytoma. Not expressed in liver.

The protein resides in the secreted. Functionally, secretogranin-1 is a neuroendocrine secretory granule protein, which may be the precursor for other biologically active peptides. This Homo sapiens (Human) protein is Secretogranin-1 (CHGB).